We begin with the raw amino-acid sequence, 146 residues long: Hemoglobin subunit beta (146 aa).

The residue at position 1 (V1) is an N-acetylvaline. A Globin domain is found at 2-146; that stretch reads HLSGEEKTAL…VANALAHKYH (145 aa). A Phosphoserine modification is found at S44. K59 bears the N6-acetyllysine mark. Position 63 (H63) interacts with heme b. An N6-acetyllysine modification is found at K82. Residue H92 coordinates heme b. C93 bears the S-nitrosocysteine mark. Residue K144 is modified to N6-acetyllysine.

The protein belongs to the globin family. In terms of assembly, heterotetramer of two alpha chains and two beta chains. Red blood cells.

Its function is as follows. Involved in oxygen transport from the lung to the various peripheral tissues. The sequence is that of Hemoglobin subunit beta from Tamiasciurus hudsonicus (American red squirrel).